The primary structure comprises 105 residues: Heat shock protein HspQ (105 aa).

It belongs to the HspQ family.

Its subcellular location is the cytoplasm. Functionally, involved in the degradation of certain denaturated proteins, including DnaA, during heat shock stress. This Blochmanniella floridana protein is Heat shock protein HspQ.